The primary structure comprises 433 residues: Homogentisate 1,2-dioxygenase (433 aa).

Residue His-288 is the Proton acceptor of the active site. Residues His-331 and Glu-337 each contribute to the Fe cation site. Residues Tyr-346 and His-367 each contribute to the homogentisate site. Residue His-367 participates in Fe cation binding.

The protein belongs to the homogentisate dioxygenase family. Hexamer; dimer of trimers. Fe cation serves as cofactor.

The catalysed reaction is homogentisate + O2 = 4-maleylacetoacetate + H(+). Its pathway is amino-acid degradation; L-phenylalanine degradation; acetoacetate and fumarate from L-phenylalanine: step 4/6. Its function is as follows. Involved in the catabolism of homogentisate (2,5-dihydroxyphenylacetate or 2,5-OH-PhAc), a central intermediate in the degradation of phenylalanine and tyrosine. Catalyzes the oxidative ring cleavage of the aromatic ring of homogentisate to yield maleylacetoacetate. This is Homogentisate 1,2-dioxygenase from Pseudomonas putida (strain ATCC 700007 / DSM 6899 / JCM 31910 / BCRC 17059 / LMG 24140 / F1).